The sequence spans 666 residues: Endogenous retrovirus group K member 6 Gag polyprotein (666 aa).

A lipid anchor (N-myristoyl glycine) is attached at Gly-2. The segment at 165–264 (GKGPELVGPS…APPSRQGSKL (100 aa)) is disordered. A compositionally biased stretch (pro residues) spans 232–247 (GMPPAPQGRAPYPQPP). CCHC-type zinc fingers lie at residues 544-561 (RKCY…NCPV) and 580-597 (DLCP…QCRS). The disordered stretch occupies residues 598–642 (KFDKNGQPLSGNEQRGQPQAPQQTGAFPIQPFVPQGFQGQQPPLS). The segment covering 604–622 (QPLSGNEQRGQPQAPQQTG) has biased composition (polar residues). Low complexity predominate over residues 624–640 (FPIQPFVPQGFQGQQPP).

Belongs to the beta type-B retroviral Gag protein family. HERV class-II K(HML-2) gag subfamily. In terms of processing, myristoylation is essential for retroviral assembly. Alteration of the glycine residue leads to a block in the budding of particles and an accumulation of Gag inside the cell. Post-translationally, specific enzymatic cleavages may yield mature proteins.

The protein resides in the cell membrane. In terms of biological role, the products of the Gag polyproteins of infectious retroviruses perform highly complex orchestrated tasks during the assembly, budding, maturation, and infection stages of the viral replication cycle. During viral assembly, the proteins form membrane associations and self-associations that ultimately result in budding of an immature virion from the infected cell. Gag precursors also function during viral assembly to selectively bind and package two plus strands of genomic RNA. Endogenous Gag proteins may have kept, lost or modified their original function during evolution. The polypeptide is Endogenous retrovirus group K member 6 Gag polyprotein (ERVK-6) (Homo sapiens (Human)).